A 113-amino-acid polypeptide reads, in one-letter code: UPF0482 protein YnfB (113 aa).

An N-terminal signal peptide occupies residues 1–28; that stretch reads MKITLSKRIGLLAFLLPCALALSTTVHA.

This sequence belongs to the UPF0482 family.

The sequence is that of UPF0482 protein YnfB from Shigella dysenteriae serotype 1 (strain Sd197).